A 1370-amino-acid polypeptide reads, in one-letter code: DNA-directed RNA polymerase subunit beta (1370 aa).

Belongs to the RNA polymerase beta chain family. As to quaternary structure, the RNAP catalytic core consists of 2 alpha, 1 beta, 1 beta' and 1 omega subunit. When a sigma factor is associated with the core the holoenzyme is formed, which can initiate transcription.

The enzyme catalyses RNA(n) + a ribonucleoside 5'-triphosphate = RNA(n+1) + diphosphate. Its function is as follows. DNA-dependent RNA polymerase catalyzes the transcription of DNA into RNA using the four ribonucleoside triphosphates as substrates. The protein is DNA-directed RNA polymerase subunit beta of Bordetella avium (strain 197N).